Reading from the N-terminus, the 163-residue chain is Bacterial microcompartment assembly protein PduM (163 aa).

Belongs to the PduM family. Interacts with shell protein PduK.

It localises to the bacterial microcompartment. It participates in polyol metabolism; 1,2-propanediol degradation. Plays an essential role in assembly and/or stability of the bacterial microcompartment (BMC) dedicated to 1,2-propanediol (1,2-PD) degradation. Overexpression impairs BMC formation. Functionally, the 1,2-PD-specific bacterial microcompartment (BMC) concentrates low levels of 1,2-PD catabolic enzymes, concentrates volatile reaction intermediates thus enhancing pathway flux and keeps the level of toxic, mutagenic propionaldehyde low. This Salmonella typhimurium (strain LT2 / SGSC1412 / ATCC 700720) protein is Bacterial microcompartment assembly protein PduM.